Consider the following 201-residue polypeptide: E3 ubiquitin-protein ligase MIR1 (201 aa).

The RING-CH-type zinc-finger motif lies at M1–K58. Topologically, residues M1 to C81 are cytoplasmic. Residues C8, C11, C22, C24, H32, C35, C48, and C51 each coordinate Zn(2+). A DIRT region spans residues G52 to E79. Residues L82–V102 form a helical membrane-spanning segment. At N103–Q113 the chain is on the extracellular side. A helical transmembrane segment spans residues V114–V134. The Cytoplasmic segment spans residues M135–V201.

In terms of assembly, interacts with host UBE2J2.

Its subcellular location is the host endoplasmic reticulum membrane. It catalyses the reaction [E2 ubiquitin-conjugating enzyme]-S-ubiquitinyl-L-cysteine + [acceptor protein]-L-cysteine = [E2 ubiquitin-conjugating enzyme]-L-cysteine + [acceptor protein]-S-ubiquitinyl-L-cysteine.. Its pathway is protein modification; protein ubiquitination. Functionally, E3 ubiquitin-protein ligase that mediates ubiquitination of host surface class I (MHC-I) H-2D(b)/H2-D1 and H-2K(b)/H2-K1 molecules before they exit the endoplasmic reticulum, leading to their degradation by the endoplasmic reticulum-associated degradation (ERAD) system, thus blocking the immune detection of virus-infected cells. Mediates ubiquitination of lysine, as well as serine and threonine residues present in the cytoplasmic tail of surface class I molecules. Promotes ubiquitination of hydroxylated serine or threonine residues via ester bonds instead of the classical isopeptide linkage. The protein is E3 ubiquitin-protein ligase MIR1 (K3) of Murid herpesvirus 4 (MuHV-4).